Consider the following 252-residue polypeptide: RNA-binding protein 2 (252 aa).

Disordered regions lie at residues 1–34 (MADG…PSGV) and 232–252 (RLQF…RGKR). The region spanning 152–238 (STLYVEGLPS…SYLRLQFSRS (87 aa)) is the RRM domain. The segment covering 242 to 252 (RSGGPGPRGKR) has biased composition (gly residues).

In terms of biological role, probable RNA-binding protein. The chain is RNA-binding protein 2 from Medicago truncatula (Barrel medic).